The following is a 430-amino-acid chain: Aspartate aminotransferase, mitochondrial (430 aa).

Residues 1–29 (MALLHSGRVLSGMAAAFHPGLAAAASARA) constitute a mitochondrion transit peptide. T48 carries the post-translational modification Phosphothreonine. The residue at position 59 (K59) is an N6-acetyllysine. G65 lines the substrate pocket. The residue at position 73 (K73) is an N6-acetyllysine; alternate. K73 carries the N6-succinyllysine; alternate modification. Residue K82 is modified to N6-acetyllysine. At K90 the chain carries N6-acetyllysine; alternate. N6-succinyllysine; alternate is present on K90. Y96 is subject to 3'-nitrotyrosine; alternate. Y96 bears the Phosphotyrosine; alternate mark. Residues K107 and K122 each carry the N6-acetyllysine; alternate modification. N6-succinyllysine; alternate is present on residues K107 and K122. S143 is subject to Phosphoserine. Position 159 is an N6-acetyllysine; alternate (K159). K159 is modified (N6-succinyllysine; alternate). W162 is a substrate binding site. N6-acetyllysine; alternate is present on K185. An N6-succinyllysine; alternate modification is found at K185. N215 serves as a coordination point for substrate. At K227 the chain carries N6-succinyllysine. K234 carries the post-translational modification N6-acetyllysine. N6-acetyllysine; alternate occurs at positions 279 and 296. Residue K279 is modified to N6-(pyridoxal phosphate)lysine; alternate. K296 is modified (N6-succinyllysine; alternate). Position 302 is an N6-acetyllysine (K302). N6-acetyllysine; alternate is present on K309. The residue at position 309 (K309) is an N6-succinyllysine; alternate. Asymmetric dimethylarginine is present on R313. K338 bears the N6-acetyllysine; alternate mark. K338 is modified (N6-succinyllysine; alternate). N6-acetyllysine is present on K345. At K363 the chain carries N6-acetyllysine; alternate. K363 is modified (N6-succinyllysine; alternate). K364 and K387 each carry N6-acetyllysine. Residues K396 and K404 each carry the N6-acetyllysine; alternate modification. An N6-succinyllysine; alternate mark is found at K396 and K404. Substrate is bound at residue R407.

It belongs to the class-I pyridoxal-phosphate-dependent aminotransferase family. Homodimer. The cofactor is pyridoxal 5'-phosphate. As to expression, expressed in all tissues tested: liver, pancreas, kidney, heart, spleen, arterioles, and lymphocytes.

The protein localises to the mitochondrion matrix. Its subcellular location is the cell membrane. It carries out the reaction L-aspartate + 2-oxoglutarate = oxaloacetate + L-glutamate. It catalyses the reaction L-kynurenine + 2-oxoglutarate = kynurenate + L-glutamate + H2O. In terms of biological role, catalyzes the irreversible transamination of the L-tryptophan metabolite L-kynurenine to form kynurenic acid (KA). As a member of the malate-aspartate shuttle, it has a key role in the intracellular NAD(H) redox balance. Is important for metabolite exchange between mitochondria and cytosol, and for amino acid metabolism. Facilitates cellular uptake of long-chain free fatty acids. The protein is Aspartate aminotransferase, mitochondrial (Got2) of Rattus norvegicus (Rat).